A 305-amino-acid polypeptide reads, in one-letter code: Type II secretion system protein C (305 aa).

The Cytoplasmic segment spans residues 1 to 29 (MEFKQLPPLAAWPRLLSQNTLRWQKPISE). The chain crosses the membrane as a helical span at residues 30–50 (GLTLLLLVASAWTLGKMVWVV). Residues 51–305 (SAEQTPVPTW…GQQHDVYIQF (255 aa)) lie on the Periplasmic side of the membrane.

The protein belongs to the GSP C family.

The protein localises to the cell inner membrane. Involved in a type II secretion system (T2SS, formerly general secretion pathway, GSP) for the export of proteins. Required for secretion of cholera toxin through the outer membrane. This chain is Type II secretion system protein C (epsC), found in Vibrio cholerae serotype O1 (strain ATCC 39315 / El Tor Inaba N16961).